Consider the following 174-residue polypeptide: Large ribosomal subunit protein uL10 (174 aa).

This sequence belongs to the universal ribosomal protein uL10 family. As to quaternary structure, part of the ribosomal stalk of the 50S ribosomal subunit. The N-terminus interacts with L11 and the large rRNA to form the base of the stalk. The C-terminus forms an elongated spine to which L12 dimers bind in a sequential fashion forming a multimeric L10(L12)X complex.

Its function is as follows. Forms part of the ribosomal stalk, playing a central role in the interaction of the ribosome with GTP-bound translation factors. In Anaeromyxobacter sp. (strain K), this protein is Large ribosomal subunit protein uL10.